Consider the following 760-residue polypeptide: General transcription and DNA repair factor IIH helicase subunit XPD (760 aa).

The 277-residue stretch at 7–283 (GLLVYFPYDY…KETDEQRLRD (277 aa)) folds into the Helicase ATP-binding domain. Position 42–49 (42–49 (MPSGTGKT)) interacts with ATP. [4Fe-4S] cluster is bound by residues C116, C134, C155, and C190. Residues 234–237 (DEAH) carry the DEAH box motif. Residues 438–637 (MDASLAIKPV…TQSRILKARL (200 aa)) are mediates interaction with MMS19.

The protein belongs to the helicase family. RAD3/XPD subfamily. In terms of assembly, component of the 7-subunit TFIIH core complex composed of XPB/ERCC3, XPD/ERCC2, GTF2H1, GTF2H2, GTF2H3, GTF2H4 and GTF2H5, which is active in NER. The core complex associates with the 3-subunit CDK-activating kinase (CAK) module composed of CCNH/cyclin H, CDK7 and MNAT1 to form the 10-subunit holoenzyme (holo-TFIIH) active in transcription. The interaction with GTF2H2 results in the stimulation of the 5'--&gt;3' helicase activity. Component of the MMXD complex, which includes CIAO1, ERCC2, CIAO2B, MMS19 and SLC25A5. Interacts with CIAO1 and CIAO2B; the interaction WITH CIAO2B is direct. Interacts with ATF7IP. Interacts directly with MMS19. Part of TBP-based Pol II pre-initiation complex (PIC), in which Pol II core assembles with general transcription factors and other specific initiation factors including GTF2E1, GTF2E2, GTF2F1, GTF2F2, TCEA1, ERCC2, ERCC3, GTF2H2, GTF2H3, GTF2H4, GTF2H5, GTF2A1, GTF2A2, GTF2B and TBP; this large multi-subunit PIC complex mediates DNA unwinding and targets Pol II core to the transcription start site where the first phosphodiester bond forms. It depends on Mg(2+) as a cofactor. Requires [4Fe-4S] cluster as cofactor. In terms of processing, ISGylated.

It localises to the nucleus. Its subcellular location is the cytoplasm. The protein localises to the cytoskeleton. The protein resides in the spindle. The catalysed reaction is Couples ATP hydrolysis with the unwinding of duplex DNA at the replication fork by translocating in the 5'-3' direction. This creates two antiparallel DNA single strands (ssDNA). The leading ssDNA polymer is the template for DNA polymerase III holoenzyme which synthesizes a continuous strand.. It carries out the reaction ATP + H2O = ADP + phosphate + H(+). In terms of biological role, ATP-dependent 5'-3' DNA helicase, component of the general transcription and DNA repair factor IIH (TFIIH) core complex, which is involved in general and transcription-coupled nucleotide excision repair (NER) of damaged DNA and, when complexed to CDK-activating kinase (CAK), involved in transcription by RNA polymerase II. In NER, TFIIH acts by opening DNA around the lesion to allow the excision of the damaged oligonucleotide and its replacement by a new DNA fragment. The ATP-dependent helicase activity of XPD/ERCC2 is required for DNA opening. In transcription, TFIIH has an essential role in transcription initiation. When the pre-initiation complex (PIC) has been established, TFIIH is required for promoter opening and promoter escape. Phosphorylation of the C-terminal tail (CTD) of the largest subunit of RNA polymerase II by the kinase module CAK controls the initiation of transcription. XPD/ERCC2 acts by forming a bridge between CAK and the core-TFIIH complex. Involved in the regulation of vitamin-D receptor activity. As part of the mitotic spindle-associated MMXD complex it plays a role in chromosome segregation. Might have a role in aging process and could play a causative role in the generation of skin cancers. The polypeptide is General transcription and DNA repair factor IIH helicase subunit XPD (Ercc2) (Mus musculus (Mouse)).